The following is a 329-amino-acid chain: Chloroplast envelope quinone oxidoreductase homolog (329 aa).

R58 contributes to the substrate binding site.

It belongs to the zinc-containing alcohol dehydrogenase family. Quinone oxidoreductase subfamily. As to quaternary structure, homodimer or homotetramer. Transition to monomer upon NADPH binding. Interacts with calmodulin. Interacts with HP30-1, HP30-2 and HP20.

The protein resides in the plastid. It is found in the chloroplast inner membrane. NADPH-dependent alpha,beta-unsaturated oxoene reductase reducing the double bond of medium-chain (C9) to long-chain (C18) reactive electrophile species deriving from poly-unsaturated fatty acid peroxides. The best substrates are 13-lipoxygenase-derived gamma-ketols, but is unable to reduce the double bond of short-chain alkenals and alkenones such as acrolein, crotonaldehyde, 3-buten-2-one, 4-hexen-3-one and trans-2-hexenal, or quinones such as duroquinone, decylubiquinone, coenzyme Q0, menadione, menaquinone and phylloquinone. Can use trans-2-nonenal, trans-3-decen-2-one, 4-hydroxynonenal, 12-oxo-10(E) dodecanoate (traumatin), 4-oxononenal, trans-1,3 diphenyl-2-propenone, trans-1,4-diphenyl-2-butene-1,4-dione, 9-oxo-12,13-epoxy-(10E)-octadecenoic acid (trans-EKODE-1b), 9-hydroxy-12-oxo-10(E)-octadecenoic acid, 9-Hydroxy-12-oxo-10(E),15(Z)-octadecadienoic acid and 9,13-dihydroxy-10-oxo-11-octadecenoic acid as substrates, but has no activity with 13(R,S)-hydroperoxy-9(Z),11(E)-octadecadienoic acid (13-HPOD), 9(S),12(S),13(S)-trihydroxy-10(E)-octadecenoic acid, 13-hydroxy-12-oxo-9(Z)-octadecenoic acid, 9-oxo-10(E),12(Z)-octadecadienoic acid (9-KODE), 13-oxo-9(Z),11(E)-octadecadienoic acid (13-KODE) and 12-oxo-10,15(Z)-phytodienoic acid (12-OPDA). The protein is Chloroplast envelope quinone oxidoreductase homolog of Arabidopsis thaliana (Mouse-ear cress).